We begin with the raw amino-acid sequence, 332 residues long: Ribosomal RNA small subunit methyltransferase C (332 aa).

This sequence belongs to the methyltransferase superfamily. RsmC family. In terms of assembly, monomer.

It is found in the cytoplasm. The enzyme catalyses guanosine(1207) in 16S rRNA + S-adenosyl-L-methionine = N(2)-methylguanosine(1207) in 16S rRNA + S-adenosyl-L-homocysteine + H(+). Functionally, specifically methylates the guanine in position 1207 of 16S rRNA in the 30S particle. In Pseudomonas syringae pv. syringae (strain B728a), this protein is Ribosomal RNA small subunit methyltransferase C.